The primary structure comprises 210 residues: Glutathione S-transferase 3 (210 aa).

Residues 1–80 enclose the GST N-terminal domain; it reads MDFYYLPLSA…YLVEKYGKQN (80 aa). Glutathione contacts are provided by residues serine 9, 50–52, and 64–66; these read HTI and ESR. Positions 87–208 constitute a GST C-terminal domain; that stretch reads CPKKRALINQ…AGCLEMKKYF (122 aa).

Belongs to the GST superfamily. Theta family. In terms of assembly, homodimer.

It catalyses the reaction RX + glutathione = an S-substituted glutathione + a halide anion + H(+). In terms of biological role, conjugation of reduced glutathione to a wide number of exogenous and endogenous hydrophobic electrophiles. This Musca domestica (House fly) protein is Glutathione S-transferase 3 (Gst3).